Reading from the N-terminus, the 406-residue chain is 3-oxoacyl-[acyl-carrier-protein] synthase 1 (406 aa).

The Ketosynthase family 3 (KS3) domain occupies 1–403 (MKRAVITGLG…GTNATLVMRK (403 aa)). Active-site for beta-ketoacyl synthase activity residues include Cys163, His298, and His333.

This sequence belongs to the thiolase-like superfamily. Beta-ketoacyl-ACP synthases family. In terms of assembly, homodimer.

The protein localises to the cytoplasm. The enzyme catalyses a fatty acyl-[ACP] + malonyl-[ACP] + H(+) = a 3-oxoacyl-[ACP] + holo-[ACP] + CO2. It catalyses the reaction (3Z)-decenoyl-[ACP] + malonyl-[ACP] + H(+) = 3-oxo-(5Z)-dodecenoyl-[ACP] + holo-[ACP] + CO2. Its pathway is lipid metabolism; fatty acid biosynthesis. Its function is as follows. Involved in the type II fatty acid elongation cycle. Catalyzes the elongation of a wide range of acyl-ACP by the addition of two carbons from malonyl-ACP to an acyl acceptor. Can also use unsaturated fatty acids. Catalyzes a key reaction in unsaturated fatty acid (UFA) synthesis, the elongation of the cis-3-decenoyl-ACP produced by FabA. This is 3-oxoacyl-[acyl-carrier-protein] synthase 1 (fabB) from Escherichia coli O6:H1 (strain CFT073 / ATCC 700928 / UPEC).